Reading from the N-terminus, the 615-residue chain is 9-cis-epoxycarotenoid dioxygenase NCED1, chloroplastic (615 aa).

A chloroplast-targeting transit peptide spans 1–41; sequence MPSPASNTWINTTLPSSCSSPFKDLASTSSSPTTLLPFKKR. Disordered stretches follow at residues 20–45 and 62–101; these read SPFKDLASTSSSPTTLLPFKKRSSSN and YQPTSTSTTTTPTPIKPTTTTTTTTPHRETKPLSDTKQPF. Low complexity-rich tracts occupy residues 27–37 and 64–86; these read STSSSPTTLLP and PTSTSTTTTPTPIKPTTTTTTTT. 3 residues coordinate Fe cation: histidine 316, histidine 365, and histidine 430. The stretch at 571–592 forms a coiled coil; the sequence is KEWKSELQIVNAQNLKLEASIK. Histidine 602 provides a ligand contact to Fe cation.

The protein belongs to the carotenoid oxygenase family. It depends on Fe(2+) as a cofactor.

It localises to the plastid. Its subcellular location is the chloroplast thylakoid membrane. It carries out the reaction a 9-cis-epoxycarotenoid + O2 = a 12'-apo-carotenal + 2-cis,4-trans-xanthoxin. The enzyme catalyses 9-cis-violaxanthin + O2 = (3S,5R,6S)-5,6-epoxy-3-hydroxy-5,6-dihydro-12'-apo-beta-caroten-12'-al + 2-cis,4-trans-xanthoxin. It catalyses the reaction 9'-cis-neoxanthin + O2 = (3S,5R,6R)-3,5-dihydroxy-6,7-didehydro-5,6-dihydro-12'-apo-beta-caroten-12'-al + 2-cis,4-trans-xanthoxin. Has a 11,12(11',12') 9-cis epoxycarotenoid cleavage activity. Catalyzes the first step of abscisic-acid biosynthesis from carotenoids, in response to water stress. Active on 9-cis-violaxanthin and 9'-cis-neoxanthin, but not on the all-trans isomers of violaxanthin and neoxanthin. This chain is 9-cis-epoxycarotenoid dioxygenase NCED1, chloroplastic (NCED1), found in Phaseolus vulgaris (Kidney bean).